A 194-amino-acid chain; its full sequence is Leucyl/phenylalanyl-tRNA--protein transferase (194 aa).

This sequence belongs to the L/F-transferase family.

The protein resides in the cytoplasm. It catalyses the reaction N-terminal L-lysyl-[protein] + L-leucyl-tRNA(Leu) = N-terminal L-leucyl-L-lysyl-[protein] + tRNA(Leu) + H(+). The catalysed reaction is N-terminal L-arginyl-[protein] + L-leucyl-tRNA(Leu) = N-terminal L-leucyl-L-arginyl-[protein] + tRNA(Leu) + H(+). The enzyme catalyses L-phenylalanyl-tRNA(Phe) + an N-terminal L-alpha-aminoacyl-[protein] = an N-terminal L-phenylalanyl-L-alpha-aminoacyl-[protein] + tRNA(Phe). In terms of biological role, functions in the N-end rule pathway of protein degradation where it conjugates Leu, Phe and, less efficiently, Met from aminoacyl-tRNAs to the N-termini of proteins containing an N-terminal arginine or lysine. The protein is Leucyl/phenylalanyl-tRNA--protein transferase of Chlorobium luteolum (strain DSM 273 / BCRC 81028 / 2530) (Pelodictyon luteolum).